Here is a 470-residue protein sequence, read N- to C-terminus: Pyruvate kinase I (470 aa).

Arginine 32 lines the substrate pocket. The K(+) site is built by asparagine 34, serine 36, aspartate 66, and threonine 67. Residue 34–37 (NFSH) coordinates ATP. An ATP-binding site is contributed by arginine 73. Lysine 76 is modified (N6-acetyllysine). Lysine 156 contacts ATP. Glutamate 222 is a binding site for Mg(2+). Positions 245, 246, and 278 each coordinate substrate. Mg(2+) is bound at residue aspartate 246. N6-acetyllysine is present on lysine 319.

It belongs to the pyruvate kinase family. As to quaternary structure, homotetramer. Mg(2+) serves as cofactor. It depends on K(+) as a cofactor.

It carries out the reaction pyruvate + ATP = phosphoenolpyruvate + ADP + H(+). It participates in carbohydrate degradation; glycolysis; pyruvate from D-glyceraldehyde 3-phosphate: step 5/5. The protein is Pyruvate kinase I (pykF) of Escherichia coli O157:H7.